Consider the following 256-residue polypeptide: Thiazole synthase (256 aa).

The Schiff-base intermediate with DXP role is filled by Lys-96. 1-deoxy-D-xylulose 5-phosphate-binding positions include Gly-157, 183-184 (AG), and 205-206 (NT).

Belongs to the ThiG family. Homotetramer. Forms heterodimers with either ThiH or ThiS.

It is found in the cytoplasm. It carries out the reaction [ThiS sulfur-carrier protein]-C-terminal-Gly-aminoethanethioate + 2-iminoacetate + 1-deoxy-D-xylulose 5-phosphate = [ThiS sulfur-carrier protein]-C-terminal Gly-Gly + 2-[(2R,5Z)-2-carboxy-4-methylthiazol-5(2H)-ylidene]ethyl phosphate + 2 H2O + H(+). The protein operates within cofactor biosynthesis; thiamine diphosphate biosynthesis. Functionally, catalyzes the rearrangement of 1-deoxy-D-xylulose 5-phosphate (DXP) to produce the thiazole phosphate moiety of thiamine. Sulfur is provided by the thiocarboxylate moiety of the carrier protein ThiS. In vitro, sulfur can be provided by H(2)S. This Clostridioides difficile (strain 630) (Peptoclostridium difficile) protein is Thiazole synthase.